The chain runs to 639 residues: Lactose permease (639 aa).

The permease stretch occupies residues 1–473 (MKDITKQKFS…AEIVIELEKT (473 aa)). 12 helical membrane passes run 20–40 (FALG…YFIV), 59–79 (IGLI…IDPI), 99–119 (VIGA…IFGL), 124–144 (WIAF…FYSF), 176–196 (IGWN…TFIA), 207–227 (WFGF…AVAF), 264–284 (LAYL…FYFF), 294–314 (FWIA…LYPV), 322–342 (KVLF…FIFG), 347–367 (MMVT…VVVL), 398–418 (ITGA…GMTG), and 433–453 (FEIY…VIFL). Residues 505–609 (NEVDGNTLTG…QDDIIMYFTQ (105 aa)) form the PTS EIIA type-1 domain. The residue at position 557 (His-557) is a Phosphohistidine; by HPr.

The protein in the N-terminal section; belongs to the sodium:galactoside symporter (TC 2.A.2) family.

The protein resides in the cell membrane. Its function is as follows. Responsible for transport of beta-galactosides into the cell, with the concomitant uptake of protons (symport system), and also for transport of homologous and heterologous exchange of beta-galactosides. The protein is Lactose permease (lacS) of Leuconostoc lactis.